The primary structure comprises 465 residues: Cruciferin CRU4 (465 aa).

The first 22 residues, 1–22 (MGPTSLLSFFFTFLTLFHGFTA), serve as a signal peptide directing secretion. Cystine bridges form between C29–C62 and C105–C283. Cupin type-1 domains are found at residues 34–236 (LNAL…ETAQ) and 289–438 (ENLD…QEAR). The residue at position 108 (T108) is a Phosphothreonine. A disordered region spans residues 112–135 (SPVFGQGQGQEQGQGQGQGQGQGF). Residues 117-133 (QGQGQEQGQGQGQGQGQ) are compositionally biased toward gly residues. Y306 bears the Phosphotyrosine mark. S308 and S443 each carry phosphoserine.

Belongs to the 11S seed storage protein (globulins) family. In terms of assembly, heterohexamer; each subunit is composed of an acidic and a basic chain derived from a single precursor and linked by a disulfide bond.

The protein localises to the rough endoplasmic reticulum. In terms of biological role, this is a seed storage protein. This Brassica napus (Rape) protein is Cruciferin CRU4 (CRU4).